Here is a 1257-residue protein sequence, read N- to C-terminus: ATP-binding cassette sub-family B member 5 (1257 aa).

The segment at 1–24 (MENSERAEEMQENYQRNGTAEEQP) is disordered. A glycan (N-linked (GlcNAc...) asparagine) is linked at Asn17. The chain crosses the membrane as a helical span at residues 49-69 (ILGILASLVNGACLPLMPLVL). One can recognise an ABC transmembrane type-1 1 domain in the interval 49 to 350 (ILGILASLVN…AAVPHFETFA (302 aa)). N-linked (GlcNAc...) asparagine glycans are attached at residues Asn85 and Asn91. Helical transmembrane passes span 110–130 (YVGI…LWII), 181–201 (KIAL…VGLV), 203–223 (GWKL…SAAA), 294–314 (VYFF…SLIL), and 322–342 (IGTV…IGAA). N-linked (GlcNAc...) asparagine glycans are attached at residues Asn371, Asn390, and Asn423. An ABC transporter 1 domain is found at 386-622 (VEFKNVSFNY…RGLYYSLVMS (237 aa)). 421–428 (GLNGSGKS) lines the ATP pocket. Transmembrane regions (helical) follow at residues 693-713 (VLGT…SIIF) and 737-757 (MIFV…GLFY). The ABC transmembrane type-1 2 domain occupies 693 to 980 (VLGTLASVLN…TLVLAPEYSK (288 aa)). Asn789 and Asn819 each carry an N-linked (GlcNAc...) asparagine glycan. A helical transmembrane segment spans residues 827–847 (VIISFIYGWEMTFLILSIAPV). N-linked (GlcNAc...) asparagine glycosylation is present at Asn910. Transmembrane regions (helical) follow at residues 917-937 (IIGS…AAGF) and 954-974 (MFIV…TLVL). One can recognise an ABC transporter 2 domain in the interval 1015-1253 (LEFREVSFFY…RDIYFKLVNA (239 aa)). 1050 to 1057 (GSSGCGKS) is an ATP binding site. N-linked (GlcNAc...) asparagine glycans are attached at residues Asn1104 and Asn1188.

Belongs to the ABC transporter superfamily. ABCB family. Multidrug resistance exporter (TC 3.A.1.201) subfamily. In terms of tissue distribution, expressed by CD133-expressing progenitor cells among epidermal melanocytes (at protein level). Widely expressed with specific expression in pigment cells. Highly expressed in several malignant tissues: highly expressed in clinical melanomas, with low expression in normal skin. In melanoma, marks malignant melanoma-initiating cells (MMIC), in which clinical virulence resides as a consequence of unlimited self-renewal capacity, resulting in inexorable tumor progression and metastasis. Also highly expressed in a number of leukemia cells. Expressed in basal limbal epithelium.

It is found in the cell membrane. The catalysed reaction is daunorubicin(in) + ATP + H2O = daunorubicin(out) + ADP + phosphate + H(+). In terms of biological role, energy-dependent efflux transporter responsible for decreased drug accumulation in multidrug-resistant cells. Specifically present in limbal stem cells, where it plays a key role in corneal development and repair. The chain is ATP-binding cassette sub-family B member 5 from Homo sapiens (Human).